The following is a 1445-amino-acid chain: 3'-5' RNA helicase YTHDC2 (1445 aa).

Positions 1-50 are disordered; that stretch reads MSRPSSVSPRPPAPSGGGTGGGGGGSGGGGGGGGGGPASCGPGGGGRAKG. Residues 15-48 show a composition bias toward gly residues; it reads SGGGTGGGGGGSGGGGGGGGGGPASCGPGGGGRA. Positions 53–121 constitute an R3H domain; that stretch reads DIRIDEEVKI…NRYLTVKKKD (69 aa). The Helicase ATP-binding domain maps to 218-384; sequence VKIIKENKVV…FGSCPVIYIQ (167 aa). An ATP-binding site is contributed by 231–238; that stretch reads GETGSGKT. A DEAH box motif is present at residues 331–334; it reads DEVH. ANK repeat units lie at residues 521–553 and 554–586; these read TSAT…SKAS and NGWM…FGNL. In terms of domain architecture, Helicase C-terminal spans 627-799; sequence LLYNICHSCD…ELCLHTKLLA (173 aa). Phosphoserine is present on residues Ser1104, Ser1105, and Ser1107. A compositionally biased stretch (polar residues) spans 1179–1189; it reads EQSAGLQQPSG. The disordered stretch occupies residues 1179 to 1303; sequence EQSAGLQQPS…SPSPRPNMPI (125 aa). Over residues 1246–1264 the composition is skewed to basic and acidic residues; sequence KYKDRGILHPKRSTDDRSD. Over residues 1265–1279 the composition is skewed to low complexity; the sequence is QSSVKSTDSSSYPSP. 3 positions are modified to phosphoserine: Ser1278, Ser1282, and Ser1296. A YTH domain is found at 1303 to 1433; that stretch reads IRYFIMKSSN…QVGEQLLQLW (131 aa). RNA contacts are provided by residues 1309 to 1311, Trp1325, and Trp1375; that span reads KSS.

This sequence belongs to the DEAD box helicase family. DEAH subfamily. As to quaternary structure, interacts with MEIOC; binds transcripts that regulate the mitotic cell cycle inhibiting progression into metaphase, thereby allowing meiotic prophase to proceed normally. Interacts (via ANK repeats) with XRN1. Interacts with ZCCHC4. Associates with the small ribosomal subunit. Interacts with RBM46. Present in male and female germ cells (at protein level). Highly expressed in testis. Not detected in spermatogonia next to the tubule wall but is strongly expressed in spermatocytes, suggesting that it is up-regulated in germ cells upon entry into meiosis (at protein level).

It is found in the cytoplasm. The protein resides in the perinuclear region. It carries out the reaction ATP + H2O = ADP + phosphate + H(+). 3'-5' RNA helicase that plays a key role in the male and female germline by promoting transition from mitotic to meiotic divisions in stem cells. Specifically recognizes and binds N6-methyladenosine (m6A)-containing RNAs, a modification present at internal sites of mRNAs and some non-coding RNAs that plays a role in the efficiency of RNA processing and stability. Essential for ensuring a successful progression of the meiotic program in the germline by regulating the level of m6A-containing RNAs. Acts by binding and promoting degradation of m6A-containing mRNAs: the 3'-5' RNA helicase activity is required for this process and RNA degradation may be mediated by XRN1 exoribonuclease. Required for both spermatogenesis and oogenesis. This Mus musculus (Mouse) protein is 3'-5' RNA helicase YTHDC2.